We begin with the raw amino-acid sequence, 238 residues long: Probable transcriptional regulatory protein SSU98_0387 (238 aa).

This sequence belongs to the TACO1 family. YeeN subfamily.

The protein resides in the cytoplasm. In Streptococcus suis (strain 98HAH33), this protein is Probable transcriptional regulatory protein SSU98_0387.